A 108-amino-acid chain; its full sequence is MAEEFVQQRLANNKVTIFVKFTCPFCRNALDILNKFSFKRGAYEIVDIKEFKPENELRDYFEQITGGRTVPRIFFGKTSIGGYSDLLEIDNMDALGDILLSIGVLRTC.

Residues 3-106 enclose the Glutaredoxin domain; that stretch reads EEFVQQRLAN…DILLSIGVLR (104 aa). Cys-23 and Cys-26 are oxidised to a cystine.

It belongs to the glutaredoxin family.

It localises to the virion. Functionally, displays thioltransferase and dehydroascorbate reductase activities. The sequence is that of Glutaredoxin-1 (OPG075) from Cynomys gunnisoni (Gunnison's prairie dog).